Reading from the N-terminus, the 475-residue chain is Ribulose bisphosphate carboxylase large chain (475 aa).

Positions 1–2 (MS) are excised as a propeptide. Proline 3 bears the N-acetylproline mark. An N6,N6,N6-trimethyllysine modification is found at lysine 14. Positions 123 and 173 each coordinate substrate. Lysine 175 serves as the catalytic Proton acceptor. Lysine 177 is a substrate binding site. Mg(2+) is bound by residues lysine 201, aspartate 203, and glutamate 204. The residue at position 201 (lysine 201) is an N6-carboxylysine. Catalysis depends on histidine 294, which acts as the Proton acceptor. Residues arginine 295, histidine 327, and serine 379 each contribute to the substrate site.

It belongs to the RuBisCO large chain family. Type I subfamily. Heterohexadecamer of 8 large chains and 8 small chains; disulfide-linked. The disulfide link is formed within the large subunit homodimers. Mg(2+) is required as a cofactor. Post-translationally, the disulfide bond which can form in the large chain dimeric partners within the hexadecamer appears to be associated with oxidative stress and protein turnover.

Its subcellular location is the plastid. It localises to the chloroplast. It catalyses the reaction 2 (2R)-3-phosphoglycerate + 2 H(+) = D-ribulose 1,5-bisphosphate + CO2 + H2O. The enzyme catalyses D-ribulose 1,5-bisphosphate + O2 = 2-phosphoglycolate + (2R)-3-phosphoglycerate + 2 H(+). In terms of biological role, ruBisCO catalyzes two reactions: the carboxylation of D-ribulose 1,5-bisphosphate, the primary event in carbon dioxide fixation, as well as the oxidative fragmentation of the pentose substrate in the photorespiration process. Both reactions occur simultaneously and in competition at the same active site. The sequence is that of Ribulose bisphosphate carboxylase large chain from Zygnema circumcarinatum (Green alga).